A 193-amino-acid chain; its full sequence is ATP-dependent Clp protease proteolytic subunit 2 (193 aa).

S98 acts as the Nucleophile in catalysis. Residue H123 is part of the active site.

It belongs to the peptidase S14 family. Fourteen ClpP subunits assemble into 2 heptameric rings which stack back to back to give a disk-like structure with a central cavity, resembling the structure of eukaryotic proteasomes.

It localises to the cytoplasm. The catalysed reaction is Hydrolysis of proteins to small peptides in the presence of ATP and magnesium. alpha-casein is the usual test substrate. In the absence of ATP, only oligopeptides shorter than five residues are hydrolyzed (such as succinyl-Leu-Tyr-|-NHMec, and Leu-Tyr-Leu-|-Tyr-Trp, in which cleavage of the -Tyr-|-Leu- and -Tyr-|-Trp bonds also occurs).. In terms of biological role, cleaves peptides in various proteins in a process that requires ATP hydrolysis. Has a chymotrypsin-like activity. Plays a major role in the degradation of misfolded proteins. The sequence is that of ATP-dependent Clp protease proteolytic subunit 2 from Bacillus anthracis.